The primary structure comprises 128 residues: MARVKRGVTTRARHKKVIALAKGYRGRSKNCYRAALQRLEKALAYAYRDRRARKRDFRSLWIVRINAAAGLYGLRYSEFMHGVSLCSIGLNRKMLAEMAVRDKGAFEKIAHAAAQACGRTCVVAQSNS.

It belongs to the bacterial ribosomal protein bL20 family.

In terms of biological role, binds directly to 23S ribosomal RNA and is necessary for the in vitro assembly process of the 50S ribosomal subunit. It is not involved in the protein synthesizing functions of that subunit. The protein is Large ribosomal subunit protein bL20 of Anaplasma phagocytophilum (strain HZ).